The sequence spans 831 residues: MKQKRGKQDVKMVESAPPQLLPKKGRLEISELAPQQRTIRTAEEIEMAYNEAVRKHPFYDNADHTIDFHDATVFRDARGVVGGVLLPGALPAFAATMAADVLRPAAVRTSLRSNMFGGFAPLSGIAGYFDYRGSPVELKCRKTSFTYENVHSWPNVFPMIDYVSAIYKAVFPERWAAQDAAVPDIVRIHGSPFSTLTVNQQFRTASHTDAGDFDMGYGLLAVLEGKFEGLSLALDDFGVCFRMQPRDVLIFNTHFFHSNTEPELNHPKDDWSRLTCVCYYRAALGEPACVAEYERRLARAKEIGASPPPAVDAILQKDNGNNFNKPAPTFTYSLTPFGGAASICSLHCCTAKLLRLHELLLENPTLEVILFGESLRTDDGLPRREKEQLISVHLPVVVKMSPSGGFSELGGALKAAEEKQYFFEEKYLADELGPDLMSMWTQSRAHWLRLVKEDWERLCRRDPERTKFTWNNSSAMNAAFFDLCEVAKQMMIGLLNKETPSSAENHSFWILFAAHLNYACTTENGMPRDAVGMHKLNVKLKDFHFGGTRYLKDMPPEEQERRLERKKRIEEARRRGNAARETHTDNWLLNDTFDYQQEDRKVEFEENGWMTPEAYVKHLGLKPCGDVTAAASPTEPIHVLVVLPRPAAAAPKDVKRDVPLATSEESIRLLMNPAAQRVLTGKARNVTLPSPLSFGGVKITVLFDGDDIDCIHPDFVVLQHLLAAIEEDEAAKARVKYWAHVARYCVFVVETDVRDRRHFLLREEVRVAYEDVAEDCFRSLHAAAYSTKCNRLRTTPSLIALSNSKNIGLRFKFRGSPLNTIALIVVGERLD.

The interval 80–282 (VVGGVLLPGA…RLTCVCYYRA (203 aa)) is thymine dioxygenase. 3 residues coordinate Fe cation: H207, D209, and H257. 2-oxoglutarate is bound at residue R273. Residues 409–578 (LGGALKAAEE…IEEARRRGNA (170 aa)) are DNA-binding JBP1 domain.

Belongs to the TET family. JBP1 subfamily. As to quaternary structure, monomer. Binds to DNA as a monomer. Fe(2+) is required as a cofactor.

It localises to the nucleus. It catalyses the reaction thymine + 2-oxoglutarate + O2 = 5-hydroxymethyluracil + succinate + CO2. Dioxygenase that catalyzes the first step of DNA base J (beta-d-glucosyl-HOMedU) biosynthesis by converting thymine to 5-hydroxymethyluracil (HOMedU). DNA base J is a hypermodified thymidine residue found in the genome of kinetoplastid parasites, which is localized primarily to repetitive DNA, namely the telomeres, and is implicated in the regulation of antigenic variation. Also specifically binds to base J-containing DNA (J-DNA). Involved in propagation and maintenance of DNA base J synthesis initiated by JBP2 by specifically binding already synthesized DNA base J and propagating J synthesis. Thymine dioxygenase activity and J-DNA-binding are independent functions. The sequence is that of Thymine dioxygenase JBP1-B (JBP1B) from Trypanosoma cruzi (strain CL Brener).